Reading from the N-terminus, the 59-residue chain is UPF0434 protein Noc_2677 (59 aa).

This sequence belongs to the UPF0434 family.

This Nitrosococcus oceani (strain ATCC 19707 / BCRC 17464 / JCM 30415 / NCIMB 11848 / C-107) protein is UPF0434 protein Noc_2677.